The primary structure comprises 313 residues: Foldase protein PrsA (313 aa).

The first 20 residues, 1-20 (MKKKLLAGAITLLSVATLAA), serve as a signal peptide directing secretion. Cys-21 carries N-palmitoyl cysteine lipidation. Residue Cys-21 is the site of S-diacylglycerol cysteine attachment. A PpiC domain is found at 143-241 (TPDVTAQIIR…SQYYIVKLTK (99 aa)).

Belongs to the PrsA family.

The protein localises to the cell membrane. It carries out the reaction [protein]-peptidylproline (omega=180) = [protein]-peptidylproline (omega=0). Plays a major role in protein secretion by helping the post-translocational extracellular folding of several secreted proteins. The polypeptide is Foldase protein PrsA (Streptococcus pneumoniae (strain P1031)).